Reading from the N-terminus, the 232-residue chain is 6-phosphogluconolactonase (232 aa).

It belongs to the glucosamine/galactosamine-6-phosphate isomerase family. 6-phosphogluconolactonase subfamily.

The catalysed reaction is 6-phospho-D-glucono-1,5-lactone + H2O = 6-phospho-D-gluconate + H(+). The protein operates within carbohydrate degradation; pentose phosphate pathway; D-ribulose 5-phosphate from D-glucose 6-phosphate (oxidative stage): step 2/3. Its function is as follows. Hydrolysis of 6-phosphogluconolactone to 6-phosphogluconate. The protein is 6-phosphogluconolactonase (pgl) of Haemophilus influenzae (strain ATCC 51907 / DSM 11121 / KW20 / Rd).